We begin with the raw amino-acid sequence, 488 residues long: UDP-N-acetylmuramate--L-alanine ligase (488 aa).

127–133 is an ATP binding site; the sequence is GTHGKTT.

This sequence belongs to the MurCDEF family.

It localises to the cytoplasm. The enzyme catalyses UDP-N-acetyl-alpha-D-muramate + L-alanine + ATP = UDP-N-acetyl-alpha-D-muramoyl-L-alanine + ADP + phosphate + H(+). The protein operates within cell wall biogenesis; peptidoglycan biosynthesis. Functionally, cell wall formation. This Shewanella oneidensis (strain ATCC 700550 / JCM 31522 / CIP 106686 / LMG 19005 / NCIMB 14063 / MR-1) protein is UDP-N-acetylmuramate--L-alanine ligase.